A 219-amino-acid polypeptide reads, in one-letter code: FMN-dependent NADH:quinone oxidoreductase 2 (219 aa).

FMN-binding positions include Ser-10 and 23 to 25; that span reads SIS.

The protein belongs to the azoreductase type 1 family. In terms of assembly, homodimer. FMN is required as a cofactor.

The catalysed reaction is 2 a quinone + NADH + H(+) = 2 a 1,4-benzosemiquinone + NAD(+). The enzyme catalyses N,N-dimethyl-1,4-phenylenediamine + anthranilate + 2 NAD(+) = 2-(4-dimethylaminophenyl)diazenylbenzoate + 2 NADH + 2 H(+). Quinone reductase that provides resistance to thiol-specific stress caused by electrophilic quinones. In terms of biological role, also exhibits azoreductase activity. Catalyzes the reductive cleavage of the azo bond in aromatic azo compounds to the corresponding amines. The sequence is that of FMN-dependent NADH:quinone oxidoreductase 2 from Colwellia psychrerythraea (strain 34H / ATCC BAA-681) (Vibrio psychroerythus).